The sequence spans 478 residues: Lysine histidine transporter-like 7 (478 aa).

The Cytoplasmic segment spans residues 1–63 (MSIALGNLFD…ITESRKGNVY (63 aa)). The interval 15 to 45 (ESGGSPLFMSPAPSTDPQPISGEKNGGDGGR) is disordered. A helical transmembrane segment spans residues 64–86 (TATFHLLCSGIGLQVILLPAAFA). The Extracellular portion of the chain corresponds to 87-89 (ALG). The helical transmembrane segment at 90–112 (WVWGTIILTVGFVWKLYTTWLLV) threads the bilayer. The Cytoplasmic segment spans residues 113-140 (QLHEAVPGIRISRYVRLAIASFGVKLGK). Residues 141-161 (LLGIFPVMYLSGGACTILVIT) traverse the membrane as a helical segment. Residues 162–177 (GGKSIQQLLQIMSDDN) are Extracellular-facing. A helical transmembrane segment spans residues 178–198 (TAPLTSVQCFLVFSCIAMIMS). Residues 199 to 205 (QFPNLNS) are Cytoplasmic-facing. A helical transmembrane segment spans residues 206 to 226 (LFGVSLIGAFMGIAYCTVIWI). Topologically, residues 227–241 (LPVASDSQRTQVSVS) are extracellular. The chain crosses the membrane as a helical span at residues 242–262 (YATMDKSFVHIFNAIGLIALV). Over 263–291 (YRGNNLVLEIQGTLPSDSKNPSCKTMWRA) the chain is Cytoplasmic. A helical transmembrane segment spans residues 292 to 312 (VMISHALVAICMFPLTFAVYW). Residues 313–340 (AYGDKIPATGGPVGNYLKLYTQEHSKRA) are Extracellular-facing. A helical transmembrane segment spans residues 341–361 (ACFIHLTFIFSCLCSYPINLM). The Cytoplasmic portion of the chain corresponds to 362–379 (PACDNIEMVYITKKKKPA). Residues 380–402 (SIIVRMMLRVFLSLVCFTIAVGF) traverse the membrane as a helical segment. Residues 403–406 (PFLP) are Extracellular-facing. The chain crosses the membrane as a helical span at residues 407-429 (YLAVLIGAIALLVTFTYPCFMWI). Over 430-439 (SIKKPQRKSP) the chain is Cytoplasmic. Residues 440 to 460 (MWLFNVLVGCLGASLSVLLLV) traverse the membrane as a helical segment. Residues 461–478 (ASAMRLAQKGLHANFFRP) lie on the Extracellular side of the membrane.

This sequence belongs to the amino acid/polyamine transporter 2 family. Amino acid/auxin permease (AAAP) (TC 2.A.18.2) subfamily.

The protein localises to the cell membrane. Functionally, amino acid transporter. This is Lysine histidine transporter-like 7 from Arabidopsis thaliana (Mouse-ear cress).